Reading from the N-terminus, the 381-residue chain is Sterol 24-C-methyltransferase ERG6A (381 aa).

Belongs to the class I-like SAM-binding methyltransferase superfamily. Erg6/SMT family.

The catalysed reaction is lanosterol + S-adenosyl-L-methionine = eburicol + S-adenosyl-L-homocysteine + H(+). It participates in steroid metabolism; ergosterol biosynthesis. Functionally, sterol 24-C-methyltransferase; part of the third module of ergosterol biosynthesis pathway that includes the late steps of the pathway. ERG6A and ERG6B methylate lanosterol at C-24 to produce eburicol. The third module or late pathway involves the ergosterol synthesis itself through consecutive reactions that mainly occur in the endoplasmic reticulum (ER) membrane. Firstly, the squalene synthase ERG9 catalyzes the condensation of 2 farnesyl pyrophosphate moieties to form squalene, which is the precursor of all steroids. Squalene synthase is crucial for balancing the incorporation of farnesyl diphosphate (FPP) into sterol and nonsterol isoprene synthesis. Secondly, squalene is converted into lanosterol by the consecutive action of the squalene epoxidase ERG1 and the lanosterol synthase ERG7. Then, the delta(24)-sterol C-methyltransferase ERG6 methylates lanosterol at C-24 to produce eburicol. Eburicol is the substrate of the sterol 14-alpha demethylase encoded by CYP51A, CYP51B and CYP51C, to yield 4,4,24-trimethyl ergosta-8,14,24(28)-trienol. CYP51B encodes the enzyme primarily responsible for sterol 14-alpha-demethylation, and plays an essential role in ascospore formation. CYP51A encodes an additional sterol 14-alpha-demethylase, induced on ergosterol depletion and responsible for the intrinsic variation in azole sensitivity. The third CYP51 isoform, CYP51C, does not encode a sterol 14-alpha-demethylase, but is required for full virulence on host wheat ears. The C-14 reductase ERG24 then reduces the C14=C15 double bond which leads to 4,4-dimethylfecosterol. A sequence of further demethylations at C-4, involving the C-4 demethylation complex containing the C-4 methylsterol oxidases ERG25, the sterol-4-alpha-carboxylate 3-dehydrogenase ERG26 and the 3-keto-steroid reductase ERG27, leads to the production of fecosterol via 4-methylfecosterol. ERG28 has a role as a scaffold to help anchor ERG25, ERG26 and ERG27 to the endoplasmic reticulum. The C-8 sterol isomerase ERG2 then catalyzes the reaction which results in unsaturation at C-7 in the B ring of sterols and thus converts fecosterol to episterol. The sterol-C5-desaturases ERG3A and ERG3BB then catalyze the introduction of a C-5 double bond in the B ring to produce 5-dehydroepisterol. The C-22 sterol desaturases ERG5A and ERG5B further convert 5-dehydroepisterol into ergosta-5,7,22,24(28)-tetraen-3beta-ol by forming the C-22(23) double bond in the sterol side chain. Finally, ergosta-5,7,22,24(28)-tetraen-3beta-ol is substrate of the C-24(28) sterol reductase ERG4 to produce ergosterol. This is Sterol 24-C-methyltransferase ERG6A (FG02783.1) from Gibberella zeae (strain ATCC MYA-4620 / CBS 123657 / FGSC 9075 / NRRL 31084 / PH-1) (Wheat head blight fungus).